Reading from the N-terminus, the 232-residue chain is Vacuolar iron transporter homolog 1 (232 aa).

Residues 1 to 59 (MAIDLGCHVGCASPETKQEETADPTAAPVVVDDVEAAAGGRRPGDGGGVNYVARAQWLR) lie on the Cytoplasmic side of the membrane. A helical membrane pass occupies residues 60–80 (AAVLGANDGLVSVASLMVGVG). Topologically, residues 81–89 (AANGTRRAM) are vacuolar. Residues 90 to 110 (LVSGLAGLVAGACSMAIGEFV) traverse the membrane as a helical segment. The Cytoplasmic portion of the chain corresponds to 111 to 148 (SVYAQCDIQAAQIERARGGKDADGGEEEEELPSPTMAA). Residues 149–169 (VASALSFAAGAALPLLAGGFV) form a helical membrane-spanning segment. Residues 170–175 (RPWAAR) lie on the Vacuolar side of the membrane. Residues 176 to 196 (VAAVCAASSLGLAGFGVASAY) traverse the membrane as a helical segment. At 197–208 (LGGAGVARSGVR) the chain is on the cytoplasmic side. A helical membrane pass occupies residues 209–229 (MLVGGWLAMAVTYGVLKLFGM). At 230-232 (HGV) the chain is on the vacuolar side.

This sequence belongs to the CCC1 family.

The protein localises to the vacuole membrane. The catalysed reaction is Fe(2+)(in) = Fe(2+)(out). In terms of biological role, probable vacuolar iron transporter that may be involved in the regulation of iron distribution throughout the plant. The protein is Vacuolar iron transporter homolog 1 of Oryza sativa subsp. japonica (Rice).